Consider the following 595-residue polypeptide: Probable hydrolase M10 (595 aa).

A signal peptide spans 1–23; that stretch reads MRFTSTILLRVAVLLSLGGGSQT. Residues N59, N87, N266, N436, N457, and N561 are each glycosylated (N-linked (GlcNAc...) asparagine).

It belongs to the beta-lactamase family.

It participates in secondary metabolite biosynthesis. Functionally, probable hydrolase; part of the gene cluster that mediates the biosynthesis of squalestatin S1 (SQS1, also known as zaragozic acid A), a heavily oxidized fungal polyketide that offers potent cholesterol lowering activity by targeting squalene synthase (SS). SQS1 is composed of a 2,8-dioxobicyclic[3.2.1]octane-3,4,5-tricarboxyclic acid core that is connected to two lipophilic polyketide arms. These initial steps feature the priming of an unusual benzoic acid starter unit onto the highly reducing polyketide synthase pks2, followed by oxaloacetate extension and product release to generate a tricarboxylic acid containing product. The phenylalanine ammonia lyase (PAL) M7 and the acyl-CoA ligase M9 are involved in transforming phenylalanine into benzoyl-CoA. The citrate synthase-like protein R3 is involved in connecting the C-alpha-carbons of the hexaketide chain and oxaloacetate to afford the tricarboxylic acid unit. The potential hydrolytic enzymes, M8 and M10, are in close proximity to pks2 and may participate in product release. On the other side, the tetraketide arm is synthesized by a the squalestatin tetraketide synthase pks1 and enzymatically esterified to the core in the last biosynthetic step, by the acetyltransferase M4. The biosynthesis of the tetraketide must involve 3 rounds of chain extension. After the first and second rounds methyl-transfer occurs, and in all rounds of extension the ketoreductase and dehydratase are active. The enoyl reductase and C-MeT of pks1 are not active in the final round of extension. The acetyltransferase M4 appears to have a broad substrate selectivity for its acyl CoA substrate, allowing the in vitro synthesis of novel squalestatins. The biosynthesis of SQS1 requires several oxidative steps likely performed by oxidoreductases M1, R1 and R2. Finally, in support of the identification of the cluster as being responsible for SQS1 production, the cluster contains a gene encoding a putative squalene synthase (SS) R6, suggesting a likely mechanism for self-resistance. In Phoma sp. (strain ATCC 20986 / MF5453), this protein is Probable hydrolase M10.